Here is a 45-residue protein sequence, read N- to C-terminus: Large ribosomal subunit protein bL34 (45 aa).

The segment at 1–45 (MTKRTFGGTSRKRKRVSGFRVRMRSHTGRRVIKSRRKRGRDRIAV) is disordered. Over residues 10–45 (SRKRKRVSGFRVRMRSHTGRRVIKSRRKRGRDRIAV) the composition is skewed to basic residues.

This sequence belongs to the bacterial ribosomal protein bL34 family.

The polypeptide is Large ribosomal subunit protein bL34 (Prochlorococcus marinus (strain MIT 9515)).